Consider the following 742-residue polypeptide: 5-methyltetrahydropteroyltriglutamate--homocysteine methyltransferase (742 aa).

Residues arginine 18 to lysine 21 and lysine 112 contribute to the 5-methyltetrahydropteroyltri-L-glutamate site. Residues isoleucine 420–serine 422 and glutamate 473 contribute to the L-homocysteine site. L-methionine is bound by residues isoleucine 420–serine 422 and glutamate 473. Tryptophan 550 lines the 5-methyltetrahydropteroyltri-L-glutamate pocket. Position 588 (aspartate 588) interacts with L-homocysteine. Aspartate 588 serves as a coordination point for L-methionine. Position 594 (glutamate 594) interacts with 5-methyltetrahydropteroyltri-L-glutamate. Residues histidine 630, cysteine 632, and glutamate 654 each coordinate Zn(2+). The active-site Proton donor is the histidine 683. Cysteine 715 serves as a coordination point for Zn(2+).

The protein belongs to the vitamin-B12 independent methionine synthase family. Requires Zn(2+) as cofactor.

It catalyses the reaction 5-methyltetrahydropteroyltri-L-glutamate + L-homocysteine = tetrahydropteroyltri-L-glutamate + L-methionine. Its pathway is amino-acid biosynthesis; L-methionine biosynthesis via de novo pathway; L-methionine from L-homocysteine (MetE route): step 1/1. In terms of biological role, catalyzes the transfer of a methyl group from 5-methyltetrahydrofolate to homocysteine resulting in methionine formation. The polypeptide is 5-methyltetrahydropteroyltriglutamate--homocysteine methyltransferase (Staphylococcus aureus (strain JH9)).